The primary structure comprises 189 residues: MSIKSDRWIKRMAEQHAMIEPFEPGQIKHDAAGQRIVSFGTSSYGYDVRCSREFKIFTNINSTIVDPKHFDPGSFVDIESDVCIIPPNSFALARTVEYFRIPRDTLVVCLGKSTYARCGIIVNVTPLEPEWEGRVTLEFSNTTPLPARIYANEGVAQMLFFQSDEVCETSYKDRGGKYQGQTGVTLPRT.

DCTP is bound by residues 112–117 (KSTYAR), 136–138 (TLE), Gln157, Tyr171, and Gln181. Glu138 acts as the Proton donor/acceptor in catalysis.

The protein belongs to the dCTP deaminase family. Homotrimer.

The enzyme catalyses dCTP + H2O + H(+) = dUTP + NH4(+). The protein operates within pyrimidine metabolism; dUMP biosynthesis; dUMP from dCTP (dUTP route): step 1/2. In terms of biological role, catalyzes the deamination of dCTP to dUTP. The sequence is that of dCTP deaminase from Xanthomonas campestris pv. campestris (strain 8004).